We begin with the raw amino-acid sequence, 518 residues long: Subtilisin-like serine protease Cla h 9.0101 (518 aa).

Positions 1–16 are cleaved as a signal peptide; that stretch reads MRGALAGLSLATLATA. A propeptide spans 17-138 (removed in mature form); it reads SPVLVNSIHN…ERDQEVHVLG (122 aa). An Inhibitor I9 domain is found at 44 to 136; sequence YMIKFKDHVT…LVERDQEVHV (93 aa). Positions 148–454 constitute a Peptidase S8 domain; that stretch reads PWGLARISHR…GGESNYSAIV (307 aa). Catalysis depends on charge relay system residues D184 and H216. Residues 244-298 form an igE-binding region; the sequence is RSNGSGSMSDVVKGVEYAAESHLEQVSITKKGKRKGFKGSTANMSLGGGKSPILD. Residues N246 and N286 are each glycosylated (N-linked (GlcNAc...) asparagine). Catalysis depends on S382, which acts as the Charge relay system. N449 carries an N-linked (GlcNAc...) asparagine glycan. A propeptide spans 460 to 518 (removed in mature form); the sequence is KATHRPTMLEEIESEAKVASKKVYSEGDELAHKVAELTEKVEDLIAGELKDMFRELKRE.

Belongs to the peptidase S8 family.

Its function is as follows. Serine protease. The protein is Subtilisin-like serine protease Cla h 9.0101 of Davidiella tassiana (Mycosphaerella tassiana).